The primary structure comprises 306 residues: Putative S-adenosyl-L-methionine-dependent methyltransferase MAP_4190c (306 aa).

S-adenosyl-L-methionine contacts are provided by residues Asp129 and 158 to 159 (DL).

Belongs to the UPF0677 family.

Functionally, exhibits S-adenosyl-L-methionine-dependent methyltransferase activity. The chain is Putative S-adenosyl-L-methionine-dependent methyltransferase MAP_4190c from Mycolicibacterium paratuberculosis (strain ATCC BAA-968 / K-10) (Mycobacterium paratuberculosis).